The primary structure comprises 353 residues: Probable dual-specificity RNA methyltransferase RlmN (353 aa).

The active-site Proton acceptor is glutamate 104. Positions 112 to 341 (DGGRKTICIS…ILNRRSPGKD (230 aa)) constitute a Radical SAM core domain. Cysteine 119 and cysteine 346 are oxidised to a cystine. [4Fe-4S] cluster is bound by residues cysteine 126, cysteine 130, and cysteine 133. Residues 173 to 174 (GE), serine 205, 228 to 230 (SLN), and asparagine 304 each bind S-adenosyl-L-methionine. Cysteine 346 serves as the catalytic S-methylcysteine intermediate.

The protein belongs to the radical SAM superfamily. RlmN family. The cofactor is [4Fe-4S] cluster.

It localises to the cytoplasm. It carries out the reaction adenosine(2503) in 23S rRNA + 2 reduced [2Fe-2S]-[ferredoxin] + 2 S-adenosyl-L-methionine = 2-methyladenosine(2503) in 23S rRNA + 5'-deoxyadenosine + L-methionine + 2 oxidized [2Fe-2S]-[ferredoxin] + S-adenosyl-L-homocysteine. The catalysed reaction is adenosine(37) in tRNA + 2 reduced [2Fe-2S]-[ferredoxin] + 2 S-adenosyl-L-methionine = 2-methyladenosine(37) in tRNA + 5'-deoxyadenosine + L-methionine + 2 oxidized [2Fe-2S]-[ferredoxin] + S-adenosyl-L-homocysteine. In terms of biological role, specifically methylates position 2 of adenine 2503 in 23S rRNA and position 2 of adenine 37 in tRNAs. This chain is Probable dual-specificity RNA methyltransferase RlmN, found in Leptospira interrogans serogroup Icterohaemorrhagiae serovar copenhageni (strain Fiocruz L1-130).